Here is a 214-residue protein sequence, read N- to C-terminus: MRVRYKPWAEDYLKDHPELVDMEGQHAGEMTEWFDKTQPIHIEIGSGMGQFITTLAAQNPHINYISMEREKSIVYKVLDKVKEMGLTNLKIICNDAIELNEYFKDGEVSRIYLNFSDPWPKNRHAKRRLTYHTFLALYQQILNDEGDLHFKTDNRGLFAYSLESMSQFGMYFTKINLNLHQEDDGSNILTEYEKKFSDKGSRIYRMEAKFHSQK.

Residues Glu-43, Glu-68, Asp-95, and Asp-117 each coordinate S-adenosyl-L-methionine. The active site involves Asp-117. Substrate contacts are provided by residues Lys-121, Asp-153, and Thr-190 to Glu-193.

The protein belongs to the class I-like SAM-binding methyltransferase superfamily. TrmB family.

It catalyses the reaction guanosine(46) in tRNA + S-adenosyl-L-methionine = N(7)-methylguanosine(46) in tRNA + S-adenosyl-L-homocysteine. Its pathway is tRNA modification; N(7)-methylguanine-tRNA biosynthesis. In terms of biological role, catalyzes the formation of N(7)-methylguanine at position 46 (m7G46) in tRNA. The protein is tRNA (guanine-N(7)-)-methyltransferase of Staphylococcus aureus (strain Mu3 / ATCC 700698).